Reading from the N-terminus, the 234-residue chain is Isoprenyl transferase (234 aa).

Aspartate 13 is an active-site residue. Position 13 (aspartate 13) interacts with Mg(2+). Residues 14 to 17 (GNGR), tryptophan 18, arginine 26, histidine 30, and 58 to 60 (STE) each bind substrate. The active-site Proton acceptor is the asparagine 61. Substrate contacts are provided by residues tryptophan 62, arginine 64, arginine 180, and 186–188 (RLS). Residue glutamate 199 participates in Mg(2+) binding.

The protein belongs to the UPP synthase family. Homodimer. Mg(2+) serves as cofactor.

Its function is as follows. Catalyzes the condensation of isopentenyl diphosphate (IPP) with allylic pyrophosphates generating different type of terpenoids. The protein is Isoprenyl transferase of Helicobacter pylori (strain J99 / ATCC 700824) (Campylobacter pylori J99).